The sequence spans 129 residues: Protein BEX2 (129 aa).

The tract at residues 1–38 (MESKVEQGVKNLNMENDHQEKEEKEEKPQDANKREPVV) is disordered. Residues 15–36 (ENDHQEKEEKEEKPQDANKREP) show a composition bias toward basic and acidic residues. Position 51 is an omega-N-methylarginine (R51). Residues 108–129 (SLRAVSTDPPHHDHHDEFCLMP) are disordered. Positions 116–129 (PPHHDHHDEFCLMP) are enriched in basic and acidic residues. The segment at 118–122 (HHDHH) is his cluster. C126 serves as a coordination point for Zn(2+).

The protein belongs to the BEX family. As to quaternary structure, interacts with LMO2, possibly leading to regulate the transcriptional activity of a DNA-binding complex containing LMO2. Interacts with OMP.

The protein resides in the nucleus. It is found in the cytoplasm. Regulator of mitochondrial apoptosis and G1 cell cycle. Regulates the level of PP2A regulatory subunit B and PP2A phosphatase activity. In absence of reductive stress, acts as a pseudosubstrate for the CRL2(FEM1B) complex: associates with FEM1B via zinc, thereby preventing association between FEM1B and its substrates. The protein is Protein BEX2 (Bex2) of Rattus norvegicus (Rat).